A 370-amino-acid polypeptide reads, in one-letter code: Chorismate synthase (370 aa).

Residues R48 and R54 each coordinate NADP(+). Residues 130 to 132 (RSS), 242 to 243 (NA), G287, 302 to 306 (KPTSS), and R328 contribute to the FMN site.

Belongs to the chorismate synthase family. Homotetramer. FMNH2 serves as cofactor.

The enzyme catalyses 5-O-(1-carboxyvinyl)-3-phosphoshikimate = chorismate + phosphate. It participates in metabolic intermediate biosynthesis; chorismate biosynthesis; chorismate from D-erythrose 4-phosphate and phosphoenolpyruvate: step 7/7. Functionally, catalyzes the anti-1,4-elimination of the C-3 phosphate and the C-6 proR hydrogen from 5-enolpyruvylshikimate-3-phosphate (EPSP) to yield chorismate, which is the branch point compound that serves as the starting substrate for the three terminal pathways of aromatic amino acid biosynthesis. This reaction introduces a second double bond into the aromatic ring system. The polypeptide is Chorismate synthase (Xanthobacter autotrophicus (strain ATCC BAA-1158 / Py2)).